The chain runs to 98 residues: Integration host factor subunit alpha (98 aa).

It belongs to the bacterial histone-like protein family. In terms of assembly, heterodimer of an alpha and a beta chain.

This protein is one of the two subunits of integration host factor, a specific DNA-binding protein that functions in genetic recombination as well as in transcriptional and translational control. The sequence is that of Integration host factor subunit alpha from Idiomarina loihiensis (strain ATCC BAA-735 / DSM 15497 / L2-TR).